We begin with the raw amino-acid sequence, 204 residues long: Nicotine blue oxidoreductase (204 aa).

As to quaternary structure, homotetramer. FMN is required as a cofactor.

It catalyses the reaction 3,3'-bipyridine-2,2',5,5',6,6'-hexol + NADP(+) = (E)-2,2',5,5'-tetrahydroxy-6H,6'H-(3,3'-bipyridinylidene)-6,6'-dione + NADPH + 3 H(+). The catalysed reaction is 3,3'-bipyridine-2,2',5,5',6,6'-hexol + NAD(+) = (E)-2,2',5,5'-tetrahydroxy-6H,6'H-(3,3'-bipyridinylidene)-6,6'-dione + NADH + 3 H(+). It participates in alkaloid degradation; nicotine degradation. In terms of biological role, catalyzes the reduction of nicotine blue to its hydroquinone form. Nicotine blue is the name given to the compound formed by the autocatalytic condensation of two molecules of 2,3,6-trihydroxypyridine, an intermediate in the nicotine degradation pathway. May play a role in preventing the intracellular formation of nicotine blue semiquinone radicals, which by redox cycling would lead to the formation of toxic reactive oxygen species. Besides nicotine blue, several other quinones are reduced by nboR. The polypeptide is Nicotine blue oxidoreductase (nboR) (Paenarthrobacter nicotinovorans (Arthrobacter nicotinovorans)).